Reading from the N-terminus, the 297-residue chain is Adrenocorticotropic hormone receptor (297 aa).

At Met1–Arg23 the chain is on the extracellular side. 2 N-linked (GlcNAc...) asparagine glycosylation sites follow: Asn12 and Asn17. 2 cysteine pairs are disulfide-bonded: Cys21/Cys253 and Cys245/Cys251. Residues Val24 to Val49 traverse the membrane as a helical segment. At Phe50 to Pro58 the chain is on the cytoplasmic side. The helical transmembrane segment at Met59–Leu79 threads the bilayer. The Extracellular segment spans residues Glu80 to Asp104. The helical transmembrane segment at Ile105–Ala126 threads the bilayer. The Cytoplasmic segment spans residues Asp127 to Thr147. A helical transmembrane segment spans residues Val148–Phe168. Residues Ser169–Ser180 lie on the Extracellular side of the membrane. A helical membrane pass occupies residues Leu181–Leu199. Over Ala200–Gly217 the chain is Cytoplasmic. Residues Ala218 to Phe244 traverse the membrane as a helical segment. The Extracellular portion of the chain corresponds to Cys245–Ser256. The chain crosses the membrane as a helical span at residues Leu257 to Phe278. Over Arg279–Trp297 the chain is Cytoplasmic. Cys293 carries the S-palmitoyl cysteine lipid modification.

This sequence belongs to the G-protein coupled receptor 1 family. Homodimer. Interacts with corticotropin (ACTH). Interacts with MRAP; this interaction targets MC2R to the plasma membrane. Interacts with MRAP2; competing with MRAP for binding to MC2R and impairing the binding of corticotropin (ACTH). In terms of processing, ubiquitinated by MGRN1 that may be involved in post-endocytic trafficking and/or degradation of internalized receptor. In terms of tissue distribution, melanocytes and corticoadrenal tissue.

Its subcellular location is the cell membrane. Hormone receptor primarily expressed in adrenal cortex that plays a key role in regulating adrenocortical function. Upon corticotropin (ACTH) binding, facilitates the release of adrenal glucocorticoids, including cortisol and corticosterone. In addition, MC2R is required for fetal and neonatal adrenal gland development. Mechanistically, activates adenylate cyclase (cAMP), the MAPK cascade as well as the cAMP-dependent protein kinase A pathway leading to steroidogenic factor 1/NR5A1-mediated transcriptional activation. The polypeptide is Adrenocorticotropic hormone receptor (MC2R) (Homo sapiens (Human)).